The following is a 353-amino-acid chain: uncharacterized protein (353 aa).

Disordered stretches follow at residues 1-24, 245-280, and 305-353; these read MSTS…QQSQ, NKSS…EKVP, and AAGK…DLNN. Over residues 9–24 the composition is skewed to low complexity; the sequence is NKKNNTKQQKYQQQSQ. The segment covering 254-280 has biased composition (basic and acidic residues); that stretch reads KSGDKSTVKSTDKQVEKKVEESSEKVP. Low complexity predominate over residues 321–332; it reads VTTSTSESTVEV. A compositionally biased stretch (acidic residues) spans 342–353; sequence EPDEEVFEDLNN.

This is an uncharacterized protein from Acanthamoeba polyphaga mimivirus (APMV).